A 64-amino-acid polypeptide reads, in one-letter code: Conotoxin Im11.1 (64 aa).

Positions 1–26 (MMFRLTSVSCFLLVIACLNLVVLTNA) are cleaved as a signal peptide. 4 disulfide bridges follow: Cys-27-Cys-41, Cys-34-Cys-46, Cys-40-Cys-50, and Cys-45-Cys-54. The residue at position 57 (Asn-57) is an Asparagine amide. The propeptide occupies 61–64 (ATFQ).

It belongs to the conotoxin I2 superfamily. As to expression, expressed by the venom duct.

The protein localises to the secreted. In Conus imperialis (Imperial cone), this protein is Conotoxin Im11.1.